A 323-amino-acid chain; its full sequence is Probable cell division protein WhiA (323 aa).

The H-T-H motif DNA-binding region spans 275 to 309 (TLKELGEMLTTGQVSKSGINHRLRKLDQIAERLRS).

Belongs to the WhiA family.

Functionally, involved in cell division and chromosome segregation. This chain is Probable cell division protein WhiA, found in Listeria welshimeri serovar 6b (strain ATCC 35897 / DSM 20650 / CCUG 15529 / CIP 8149 / NCTC 11857 / SLCC 5334 / V8).